Reading from the N-terminus, the 506-residue chain is 7,8-dihydro-6-hydroxymethylpterin dimethyltransferase (506 aa).

Residues C73, C77, C80, C98, C102, and C105 each contribute to the [4Fe-4S] cluster site. The 219-residue stretch at 82-300 folds into the Radical SAM core domain; sequence NHKSTTILAN…FIKLVEEQTD (219 aa).

The protein belongs to the radical SAM superfamily. The cofactor is [4Fe-4S] cluster. It depends on S-adenosyl-L-methionine as a cofactor.

It participates in cofactor biosynthesis; 5,6,7,8-tetrahydromethanopterin biosynthesis. Functionally, is responsible for the addition of methyl groups at C-7 and C-9 of the pterin ring during methanopterin (MPT) biosynthesis. Catalyzes methylation of 7,8-dihydro-6-hydroxymethylpterin, likely using methylenetetrahydromethanopterin as a methyl group donor, via a radical-based mechanism. The protein is 7,8-dihydro-6-hydroxymethylpterin dimethyltransferase of Methanocaldococcus jannaschii (strain ATCC 43067 / DSM 2661 / JAL-1 / JCM 10045 / NBRC 100440) (Methanococcus jannaschii).